The following is a 296-amino-acid chain: MSVTGGSKDEILHKPVLLSEALKFLAPKNGGVYVDATFGAGGYTRAILSSVDCFVYAIDRDETVRRFFQVIENDFPKRTNFINGNFVDIGSLLGEVKVDGIVFDLGVSTMQLKVADRGFSFLHEGPLDMRMDRSTLLTAETVVNSYTEVKIASIIYQFGEERMSRKIAHAIVNARRKKRITTTSSLAEIVRSCFPKRYYKIDPATKTFQALRIFINDELGALECGLRTALTMLKVGSRAVVVSFHSLEDRIVKHLFRSVHGNGFNLLTKKIVVPSRDEVRENPSSRSARMRVIEKV.

Residues 41–43, Asp59, Phe86, Asp104, and Gln111 contribute to the S-adenosyl-L-methionine site; that span reads GGY.

The protein belongs to the methyltransferase superfamily. RsmH family.

The protein localises to the cytoplasm. It carries out the reaction cytidine(1402) in 16S rRNA + S-adenosyl-L-methionine = N(4)-methylcytidine(1402) in 16S rRNA + S-adenosyl-L-homocysteine + H(+). Functionally, specifically methylates the N4 position of cytidine in position 1402 (C1402) of 16S rRNA. This chain is Ribosomal RNA small subunit methyltransferase H, found in Neorickettsia sennetsu (strain ATCC VR-367 / Miyayama) (Ehrlichia sennetsu).